Consider the following 295-residue polypeptide: Probable cell division protein WhiA (295 aa).

A DNA-binding region (H-T-H motif) is located at residues 262 to 293; sequence SLRELGKKLNLTKSQIYSKLKRIIKIAERFGD.

This sequence belongs to the WhiA family.

Functionally, involved in cell division and chromosome segregation. This is Probable cell division protein WhiA from Thermotoga maritima (strain ATCC 43589 / DSM 3109 / JCM 10099 / NBRC 100826 / MSB8).